The primary structure comprises 354 residues: Lipoyl synthase, mitochondrial (354 aa).

[4Fe-4S] cluster-binding residues include Cys91, Cys96, Cys102, Cys122, Cys126, Cys129, and Ser337. One can recognise a Radical SAM core domain in the interval 107–326 (DDSLATATIM…AEYSKKLGFL (220 aa)).

The protein belongs to the radical SAM superfamily. Lipoyl synthase family. [4Fe-4S] cluster is required as a cofactor.

It localises to the mitochondrion. The catalysed reaction is [[Fe-S] cluster scaffold protein carrying a second [4Fe-4S](2+) cluster] + N(6)-octanoyl-L-lysyl-[protein] + 2 oxidized [2Fe-2S]-[ferredoxin] + 2 S-adenosyl-L-methionine + 4 H(+) = [[Fe-S] cluster scaffold protein] + N(6)-[(R)-dihydrolipoyl]-L-lysyl-[protein] + 4 Fe(3+) + 2 hydrogen sulfide + 2 5'-deoxyadenosine + 2 L-methionine + 2 reduced [2Fe-2S]-[ferredoxin]. It participates in protein modification; protein lipoylation via endogenous pathway; protein N(6)-(lipoyl)lysine from octanoyl-[acyl-carrier-protein]: step 2/2. Its function is as follows. Catalyzes the radical-mediated insertion of two sulfur atoms into the C-6 and C-8 positions of the octanoyl moiety bound to the lipoyl domains of lipoate-dependent enzymes, thereby converting the octanoylated domains into lipoylated derivatives. This chain is Lipoyl synthase, mitochondrial, found in Caenorhabditis elegans.